A 140-amino-acid chain; its full sequence is MAENREPRCAIEAELDPVEYTLRKRLPHRLPRRPNDIYVNMKTDFKAQLARCQKLLDGGTRGQNACTEIYIHGLGLAINRAINIALQLQAGSFGSLQVAANTSTVELVDELEPETDSREPLTRVRNNSAIHIRVFRVTPK.

Belongs to the histone-like Alba family. In terms of assembly, component of nuclear RNase P and RNase MRP complexes. RNase P consists of a catalytic RNA moiety and 10 different protein chains; POP1, POP4, POP5, POP7, RPP14, RPP21, RPP25, RPP30, RPP38 and RPP40. Within the RNase P complex, POP1, POP7 and RPP25 form the 'finger' subcomplex, POP5, RPP14, RPP40 and homodimeric RPP30 form the 'palm' subcomplex, and RPP21, POP4 and RPP38 form the 'wrist' subcomplex. All subunits of the RNase P complex interact with the catalytic RNA. Several subunits of RNase P are also part of the RNase MRP complex. RNase MRP consists of a catalytic RNA moiety and about 8 protein subunits; POP1, POP7, RPP25, RPP30, RPP38, RPP40 and possibly also POP4 and POP5. Interacts with SMN1. POP7 forms a heterodimer with RPP25 that binds to the P3 stem loop of the catalytic RNA.

Its subcellular location is the nucleus. It localises to the nucleolus. The protein localises to the cytoplasm. The protein resides in the cytoplasmic granule. Functionally, component of ribonuclease P, a ribonucleoprotein complex that generates mature tRNA molecules by cleaving their 5'-ends. Also a component of the MRP ribonuclease complex, which cleaves pre-rRNA sequences. In Mus musculus (Mouse), this protein is Ribonuclease P protein subunit p20 (Pop7).